The sequence spans 458 residues: Retinoic acid receptor gamma (458 aa).

The tract at residues 1-89 (MATNKERLFA…PPPPPRVYKP (89 aa)) is modulating. Position 34 is an omega-N-methylarginine (Arg34). The interval 58–83 (MASLSVETQSTSSEEMVPSSPSPPPP) is disordered. The segment covering 62–71 (SVETQSTSSE) has biased composition (polar residues). NR C4-type zinc fingers lie at residues 90 to 110 (CFVC…CEGC) and 126 to 150 (CHRD…LQKC). The segment at residues 90-155 (CFVCNDKSSG…RLQKCFEVGM (66 aa)) is a DNA-binding region (nuclear receptor). The interval 156-184 (SKEAVRNDRNKKKKEVKEEGSPDSYELSP) is hinge. The disordered stretch occupies residues 161–180 (RNDRNKKKKEVKEEGSPDSY). Residues Lys172 and Lys401 each participate in a glycyl lysine isopeptide (Lys-Gly) (interchain with G-Cter in SUMO2) cross-link. The NR LBD domain occupies 185-419 (QLEELITKVS…PLIREMLENP (235 aa)). Positions 409 to 458 (PPLIREMLENPEMFEDDSSKPGPHPKASSEDEAPGGQGKRGQSPQPDQGP) are disordered. Over residues 448–458 (RGQSPQPDQGP) the composition is skewed to polar residues.

This sequence belongs to the nuclear hormone receptor family. NR1 subfamily. In terms of assembly, homodimer. Heterodimer with a RXR molecule. Binds DNA preferentially as a RAR/RXR heterodimer. Forms a complex with PUS1 and the SRA1 RNA in the nucleus.

The protein localises to the nucleus. Its subcellular location is the cytoplasm. Receptor for retinoic acid. Retinoic acid receptors bind as heterodimers to their target response elements in response to their ligands, all-trans or 9-cis retinoic acid, and regulate gene expression in various biological processes. The RAR/RXR heterodimers bind to the retinoic acid response elements (RARE) composed of tandem 5'-AGGTCA-3' sites known as DR1-DR5. In the absence of ligand, acts mainly as an activator of gene expression due to weak binding to corepressors. Required for limb bud development. In concert with RARA or RARB, required for skeletal growth, matrix homeostasis and growth plate function. The protein is Retinoic acid receptor gamma (Rarg) of Mus musculus (Mouse).